Reading from the N-terminus, the 205-residue chain is Molybdenum cofactor guanylyltransferase (205 aa).

GTP is bound by residues 14 to 16 (LAG), lysine 27, aspartate 77, and aspartate 107. Aspartate 107 lines the Mg(2+) pocket.

This sequence belongs to the MobA family. Monomer. It depends on Mg(2+) as a cofactor.

Its subcellular location is the cytoplasm. It catalyses the reaction Mo-molybdopterin + GTP + H(+) = Mo-molybdopterin guanine dinucleotide + diphosphate. In terms of biological role, transfers a GMP moiety from GTP to Mo-molybdopterin (Mo-MPT) cofactor (Moco or molybdenum cofactor) to form Mo-molybdopterin guanine dinucleotide (Mo-MGD) cofactor. The sequence is that of Molybdenum cofactor guanylyltransferase from Burkholderia ambifaria (strain MC40-6).